The primary structure comprises 203 residues: A-type ATP synthase subunit E (203 aa).

It belongs to the V-ATPase E subunit family. In terms of assembly, has multiple subunits with at least A(3), B(3), C, D, E, F, H, I and proteolipid K(x).

Its subcellular location is the cell membrane. In terms of biological role, component of the A-type ATP synthase that produces ATP from ADP in the presence of a proton gradient across the membrane. The sequence is that of A-type ATP synthase subunit E from Methanococcus maripaludis (strain C6 / ATCC BAA-1332).